A 469-amino-acid polypeptide reads, in one-letter code: Ribulose bisphosphate carboxylase large chain (469 aa).

Residues N115 and T165 each contribute to the substrate site. K167 functions as the Proton acceptor in the catalytic mechanism. Substrate is bound at residue K169. K193, D195, and E196 together coordinate Mg(2+). At K193 the chain carries N6-carboxylysine. H286 acts as the Proton acceptor in catalysis. Positions 287, 319, and 371 each coordinate substrate.

It belongs to the RuBisCO large chain family. Type I subfamily. In terms of assembly, heterohexadecamer of 8 large chains and 8 small chains. Mg(2+) serves as cofactor.

It is found in the plastid. It localises to the organellar chromatophore. The enzyme catalyses 2 (2R)-3-phosphoglycerate + 2 H(+) = D-ribulose 1,5-bisphosphate + CO2 + H2O. The catalysed reaction is D-ribulose 1,5-bisphosphate + O2 = 2-phosphoglycolate + (2R)-3-phosphoglycerate + 2 H(+). Functionally, ruBisCO catalyzes two reactions: the carboxylation of D-ribulose 1,5-bisphosphate, the primary event in carbon dioxide fixation, as well as the oxidative fragmentation of the pentose substrate. Both reactions occur simultaneously and in competition at the same active site. This Paulinella chromatophora protein is Ribulose bisphosphate carboxylase large chain.